The chain runs to 135 residues: MSSSNNSVVYWGTGRRKTSVARVRLVPGSGTITINGRPGDHYLNFNPAYLAAVKAPLQTLGLNEQYDVLVNVHGGGLTGQADAIKQGAARALCELSADNRKPLKTEGHLSRDPRAKERRKYGLKKARKAPQFSKR.

The tract at residues 96–135 (SADNRKPLKTEGHLSRDPRAKERRKYGLKKARKAPQFSKR) is disordered. Residues 97-115 (ADNRKPLKTEGHLSRDPRA) show a composition bias toward basic and acidic residues. Over residues 116 to 135 (KERRKYGLKKARKAPQFSKR) the composition is skewed to basic residues.

It belongs to the universal ribosomal protein uS9 family.

The chain is Small ribosomal subunit protein uS9 from Prochlorococcus marinus (strain MIT 9313).